The sequence spans 461 residues: Tol-Pal system protein TolB 2 (461 aa).

A signal peptide spans 1 to 20; it reads MKIRHLLLLAGLVSAPAIVA. The interval 28 to 47 is disordered; sequence SSSAAQASGDDDGGLTGSVS.

The protein belongs to the TolB family. As to quaternary structure, the Tol-Pal system is composed of five core proteins: the inner membrane proteins TolA, TolQ and TolR, the periplasmic protein TolB and the outer membrane protein Pal. They form a network linking the inner and outer membranes and the peptidoglycan layer.

It is found in the periplasm. Its function is as follows. Part of the Tol-Pal system, which plays a role in outer membrane invagination during cell division and is important for maintaining outer membrane integrity. This Novosphingobium aromaticivorans (strain ATCC 700278 / DSM 12444 / CCUG 56034 / CIP 105152 / NBRC 16084 / F199) protein is Tol-Pal system protein TolB 2.